A 126-amino-acid polypeptide reads, in one-letter code: Small ribosomal subunit protein uS11 (126 aa).

The protein belongs to the universal ribosomal protein uS11 family. As to quaternary structure, part of the 30S ribosomal subunit.

In terms of biological role, located on the platform of the 30S subunit. In Methanosarcina acetivorans (strain ATCC 35395 / DSM 2834 / JCM 12185 / C2A), this protein is Small ribosomal subunit protein uS11.